The sequence spans 147 residues: Ribonuclease H (147 aa).

Positions 1–142 constitute an RNase H type-1 domain; that stretch reads MKKVSIYTDG…CDKLATDEIK (142 aa). 4 residues coordinate Mg(2+): Asp-9, Glu-47, Asp-69, and Asp-134.

It belongs to the RNase H family. In terms of assembly, monomer. The cofactor is Mg(2+).

It is found in the cytoplasm. The enzyme catalyses Endonucleolytic cleavage to 5'-phosphomonoester.. In terms of biological role, endonuclease that specifically degrades the RNA of RNA-DNA hybrids. This is Ribonuclease H from Acetivibrio thermocellus (strain ATCC 27405 / DSM 1237 / JCM 9322 / NBRC 103400 / NCIMB 10682 / NRRL B-4536 / VPI 7372) (Clostridium thermocellum).